The chain runs to 385 residues: S-adenosylmethionine synthase (385 aa).

Position 16 (histidine 16) interacts with ATP. Mg(2+) is bound at residue aspartate 18. Glutamate 44 is a binding site for K(+). Glutamate 57 and glutamine 100 together coordinate L-methionine. The interval 100-110 is flexible loop; it reads QSPDINQGVDK. ATP-binding positions include 165–167, 231–232, aspartate 240, 246–247, alanine 263, and lysine 267; these read DAK, RF, and RK. An L-methionine-binding site is contributed by aspartate 240. Residue lysine 271 coordinates L-methionine.

This sequence belongs to the AdoMet synthase family. In terms of assembly, homotetramer; dimer of dimers. The cofactor is Mg(2+). It depends on K(+) as a cofactor.

It localises to the cytoplasm. It carries out the reaction L-methionine + ATP + H2O = S-adenosyl-L-methionine + phosphate + diphosphate. It functions in the pathway amino-acid biosynthesis; S-adenosyl-L-methionine biosynthesis; S-adenosyl-L-methionine from L-methionine: step 1/1. Its function is as follows. Catalyzes the formation of S-adenosylmethionine (AdoMet) from methionine and ATP. The overall synthetic reaction is composed of two sequential steps, AdoMet formation and the subsequent tripolyphosphate hydrolysis which occurs prior to release of AdoMet from the enzyme. This is S-adenosylmethionine synthase from Vibrio cholerae serotype O1 (strain ATCC 39315 / El Tor Inaba N16961).